A 277-amino-acid chain; its full sequence is Deoxyguanosine kinase, mitochondrial (277 aa).

The N-terminal 39 residues, 1-39 (MAAGRFLLRRLRASFRSPLRNALVDAPHARAMHDGGGPR), are a transit peptide targeting the mitochondrion. An ATP-binding site is contributed by 45-53 (GNIAVGKST). The substrate site is built by Glu70, Tyr100, Gln111, and Arg118. Glu141 (proton acceptor) is an active-site residue. Substrate-binding residues include Arg142 and Asp147. 206-208 (RDR) lines the ATP pocket. Residue Glu211 coordinates substrate. Position 254-256 (254-256 (EDF)) interacts with ATP.

This sequence belongs to the DCK/DGK family. Homodimer. In terms of tissue distribution, spleen and thymus. Expressed at much lower levels in the brain and liver.

Its subcellular location is the mitochondrion. It is found in the cytoplasm. It carries out the reaction 2'-deoxyguanosine + ATP = dGMP + ADP + H(+). The enzyme catalyses 2'-deoxyadenosine + ATP = dAMP + ADP + H(+). Functionally, phosphorylates deoxyguanosine and deoxyadenosine in the mitochondrial matrix, with the highest efficiency for deoxyguanosine. In non-replicating cells, where cytosolic dNTP synthesis is down-regulated, mtDNA synthesis depends solely on DGUOK and TK2. Phosphorylates certain nucleoside analogs. Widely used as target of antiviral and chemotherapeutic agents. This chain is Deoxyguanosine kinase, mitochondrial (Dguok), found in Mus musculus (Mouse).